We begin with the raw amino-acid sequence, 671 residues long: Anaphase-promoting complex subunit cut9 (671 aa).

The segment at Met-1 to Ala-24 is disordered. 14 TPR repeats span residues Arg-83–Thr-114, Pro-117–Lys-142, Ser-150–Leu-173, Leu-198–Val-229, Tyr-234–Lys-257, Ala-268–Ser-296, Asp-306–Ile-334, Val-341–Arg-368, Ala-373–Met-402, Gly-407–Arg-435, Leu-442–Leu-470, Pro-475–Lys-507, Lys-513–Leu-545, and Ala-550–Ile-579. The segment at Asn-622 to Val-643 is disordered.

In terms of assembly, the APC/C is composed of at least 13 subunits: apc1, apc2, nuc2, apc4, apc5, cut9, apc8, apc10, apc11, hcn1, apc13, apc14 and apc15. Homodimer. Interacts directly with nuc2 and hcn1. Phosphorylated.

It is found in the nucleus. Component of the anaphase-promoting complex/cyclosome (APC/C), a cell cycle-regulated E3 ubiquitin-protein ligase complex that controls progression through mitosis and the G1 phase of the cell cycle. The APC/C is thought to confer substrate specificity and, in the presence of ubiquitin-conjugating E2 enzymes, it catalyzes the formation of protein-ubiquitin conjugates that are subsequently degraded by the 26S proteasome. May play a pivotal role in the control of anaphase. The chain is Anaphase-promoting complex subunit cut9 (cut9) from Schizosaccharomyces pombe (strain 972 / ATCC 24843) (Fission yeast).